The chain runs to 855 residues: Suppressor of tumorigenicity 14 protein homolog (855 aa).

Residues 1-55 are Cytoplasmic-facing; the sequence is MGSNRGRKAGGGSQDFGAGLKYNSRLENMNGFEEGVEFLPANNAKKVEKRGPRRW. S13 carries the post-translational modification Phosphoserine. Residues 56 to 76 traverse the membrane as a helical; Signal-anchor for type II membrane protein segment; the sequence is VVLVAVLFSFLLLSLMAGLLV. The Extracellular portion of the chain corresponds to 77-855; that stretch reads WHFHYRNVRV…RDWIKEHTGV (779 aa). In terms of domain architecture, SEA spans 86-203; sequence VQKVFNGHLR…TSVVAFPIDP (118 aa). N107 carries an N-linked (GlcNAc...) asparagine glycan. A disulfide bond links C214 and C244. CUB domains follow at residues 214–331 and 340–444; these read CSFA…EATF and CGGF…LAEY. N-linked (GlcNAc...) asparagine glycosylation is found at N302 and N365. Disulfide bonds link C340-C366 and C397-C410. The N-linked (GlcNAc...) asparagine glycan is linked to N421. 4 LDL-receptor class A domains span residues 451–488, 489–522, 523–561, and 565–604; these read DPCP…YCRC, NATH…DEEG, CSCP…SCDS, and VSCT…NCDC. Cystine bridges form between C453–C464, C459–C477, C471–C486, C488–C501, C496–C514, C508–C523, C525–C537, C532–C550, C544–C559, C567–C579, C574–C593, C587–C602, and C641–C657. N489 carries an N-linked (GlcNAc...) asparagine glycan. One can recognise a Peptidase S1 domain in the interval 615 to 854; the sequence is VVGGTNADEG…VRDWIKEHTG (240 aa). Residues H656 and D711 each act as charge relay system in the active site. N-linked (GlcNAc...) asparagine glycosylation is present at N772. Cystine bridges form between C776–C790 and C801–C830. Residue S805 is the Charge relay system of the active site.

The protein belongs to the peptidase S1 family. In terms of assembly, interacts with CDCP1. May interact with TMEFF1. As to expression, highly expressed in intestine, kidney, lung, and thymus. Not expressed in skeletal muscle, liver, heart, testis and brain.

The protein resides in the membrane. It carries out the reaction Cleaves various synthetic substrates with Arg or Lys at the P1 position and prefers small side-chain amino acids, such as Ala and Gly, at the P2 position.. In terms of biological role, exhibits trypsin-like activity as defined by cleavage of synthetic substrates with Arg or Lys as the P1 site. Involved in the terminal differentiation of keratinocytes through prostasin (PRSS8) activation and filaggrin (FLG) processing. Proteolytically cleaves and therefore activates TMPRSS13. The sequence is that of Suppressor of tumorigenicity 14 protein homolog (St14) from Mus musculus (Mouse).